The chain runs to 535 residues: Beta-amylase 1, chloroplastic (535 aa).

The N-terminal 36 residues, 1–36 (MALNLAQSAAAAACFATAGDARRAASVVAMPSSSSS), are a transit peptide targeting the chloroplast. Positions 115, 155, and 163 each coordinate substrate. The active-site Proton donor is E247. Substrate is bound by residues K361, H366, and T408. The active-site Proton acceptor is the E446. Substrate is bound by residues 447–448 (NA) and R480.

The protein belongs to the glycosyl hydrolase 14 family.

It localises to the plastid. The protein resides in the chloroplast. The catalysed reaction is Hydrolysis of (1-&gt;4)-alpha-D-glucosidic linkages in polysaccharides so as to remove successive maltose units from the non-reducing ends of the chains.. In terms of biological role, possesses beta-amylase activity in vitro. May be involved in cold resistance by mediating the accumulation of maltose upon freezing stress, thus contributing to the protection of membranes. The sequence is that of Beta-amylase 1, chloroplastic from Oryza sativa subsp. japonica (Rice).